Reading from the N-terminus, the 378-residue chain is MNIWLNMLTTTGLGAIIGGYTNHLAIKMLFRPHRPIYIGKFQVPFTPGLIPKRRDELAVQLGKMVVEHLLTPEGIGKKLTNEEFQKGLIHWAQVEVDKVIKNEQSLRHMLEKWNVAHVEEEVTQKIEYVITEKIQAFLAEYYTYTWEQALPHSVNEKVENAIPNVSAFILERGISFFESEEGKGRLSKMIDDFFASRGTLLNLVGMFLGNVSVVDRVQPEVIKFLGQDGTKQLLTDVLQKEWEKLKGRDVKELESFVEKEMIVSSVLSAVKVEETVSKFLNQSVQQVCEPVRETIIEKVVPSTVTKGLKWGTENVESILNNLHLAEIVQQEVSTFSTERLEDLVLSITKNELKMITYLGALLGGIIGLVQGLLLLFLR.

A helical membrane pass occupies residues 357-377; the sequence is YLGALLGGIIGLVQGLLLLFL.

This sequence belongs to the UPF0754 family.

It is found in the cell membrane. The polypeptide is UPF0754 membrane protein BCG9842_B4423 (Bacillus cereus (strain G9842)).